A 285-amino-acid polypeptide reads, in one-letter code: Elongation factor Ts (285 aa).

Positions Thr-82 to Val-85 are involved in Mg(2+) ion dislocation from EF-Tu.

It belongs to the EF-Ts family.

It is found in the cytoplasm. In terms of biological role, associates with the EF-Tu.GDP complex and induces the exchange of GDP to GTP. It remains bound to the aminoacyl-tRNA.EF-Tu.GTP complex up to the GTP hydrolysis stage on the ribosome. This Sodalis glossinidius (strain morsitans) protein is Elongation factor Ts.